Here is a 131-residue protein sequence, read N- to C-terminus: NADH-quinone oxidoreductase subunit I 2 (131 aa).

2 consecutive 4Fe-4S ferredoxin-type domains span residues 42–71 (LKVSHSKAKCVCCYLCPTVCPAKCITVEAG) and 81–110 (ERYEIDMLRCIFCGYCVEACPVDALKMTGE). 8 residues coordinate [4Fe-4S] cluster: Cys-51, Cys-54, Cys-57, Cys-61, Cys-90, Cys-93, Cys-96, and Cys-100.

It belongs to the complex I 23 kDa subunit family. NDH-1 is composed of 14 different subunits. Subunits NuoA, H, J, K, L, M, N constitute the membrane sector of the complex. [4Fe-4S] cluster is required as a cofactor.

The protein resides in the cell inner membrane. The enzyme catalyses a quinone + NADH + 5 H(+)(in) = a quinol + NAD(+) + 4 H(+)(out). Its function is as follows. NDH-1 shuttles electrons from NADH, via FMN and iron-sulfur (Fe-S) centers, to quinones in the respiratory chain. The immediate electron acceptor for the enzyme in this species is believed to be ubiquinone. Couples the redox reaction to proton translocation (for every two electrons transferred, four hydrogen ions are translocated across the cytoplasmic membrane), and thus conserves the redox energy in a proton gradient. This chain is NADH-quinone oxidoreductase subunit I 2, found in Geobacter metallireducens (strain ATCC 53774 / DSM 7210 / GS-15).